A 264-amino-acid chain; its full sequence is Cell division protein DivIB (264 aa).

At 1–23 (MAVYEERIPQVKQQRPRRRGNRK) the chain is on the cytoplasmic side. The helical transmembrane segment at 24–44 (LVFLLVLFFLTILIIVFIRSP) threads the bilayer. Residues 45 to 264 (YSKVQEIRVT…GQEQPQQPQQ (220 aa)) lie on the Extracellular side of the membrane. Residues 46-114 (SKVQEIRVTG…GLITLHITEQ (69 aa)) enclose the POTRA domain.

Belongs to the FtsQ/DivIB family. DivIB subfamily.

Its subcellular location is the cell membrane. Cell division protein that may be involved in stabilizing or promoting the assembly of the division complex. The polypeptide is Cell division protein DivIB (Brevibacillus brevis (strain 47 / JCM 6285 / NBRC 100599)).